A 213-amino-acid polypeptide reads, in one-letter code: EEF1A lysine methyltransferase 1 (213 aa).

This sequence belongs to the class I-like SAM-binding methyltransferase superfamily. EFM5 family.

The protein resides in the cytoplasm. It carries out the reaction L-lysyl-[protein] + 3 S-adenosyl-L-methionine = N(6),N(6),N(6)-trimethyl-L-lysyl-[protein] + 3 S-adenosyl-L-homocysteine + 3 H(+). In terms of biological role, protein-lysine methyltransferase that selectively catalyzes the trimethylation of EEF1A at 'Lys-79'. The polypeptide is EEF1A lysine methyltransferase 1 (Gallus gallus (Chicken)).